The chain runs to 465 residues: Alpha-2A adrenergic receptor (465 aa).

At 1–48 (MFRQEQPLAEGSFAPMGSLQPDAGNSSWNGTEAPGGGTRATPYSLQVT) the chain is on the extracellular side. N-linked (GlcNAc...) asparagine glycans are attached at residues N25 and N29. A helical membrane pass occupies residues 49–74 (LTLVCLAGLLMLFTVFGNVLVIIAVF). Over 75–85 (TSRALKAPQNL) the chain is Cytoplasmic. Residues 86 to 111 (FLVSLASADILVATLVIPFSLANEVM) traverse the membrane as a helical segment. Residues 112 to 121 (GYWYFGKVWC) lie on the Extracellular side of the membrane. C121 and C203 form a disulfide bridge. The chain crosses the membrane as a helical span at residues 122–144 (EIYLALDVLFCTSSIVHLCAISL). Over 145–164 (DRYWSITQAIEYNLKRTPRR) the chain is Cytoplasmic. The helical transmembrane segment at 165–188 (IKAIIVTVWVISAVISFPPLISIE) threads the bilayer. Over 189–207 (KKGAGGGQQPAEPSCKIND) the chain is Extracellular. Residues 208-232 (QKWYVISSSIGSFFAPCLIMILVYV) traverse the membrane as a helical segment. Topologically, residues 233–389 (RIYQIAKRRT…RQNREKRFTF (157 aa)) are cytoplasmic. Positions 242-377 (TRVPPSRRGP…RAGGAKASRW (136 aa)) are disordered. A compositionally biased stretch (basic and acidic residues) spans 313-330 (SSEHAERPQGPGKPERGP). Position 346 is a phosphoserine (S346). Over residues 353 to 364 (GAAGPGASGSGQ) the composition is skewed to gly residues. R368 is subject to Omega-N-methylarginine. Residues 390–414 (VLAVVIGVFVVCWFPFFFTYTLIAV) form a helical membrane-spanning segment. Topologically, residues 415-424 (GCPVPYQLFN) are extracellular. Residues 425–445 (FFFWFGYCNSSLNPVIYTIFN) form a helical membrane-spanning segment. Residues 446 to 465 (HDFRRAFKKILCRGDRKRIV) lie on the Cytoplasmic side of the membrane. C457 carries S-palmitoyl cysteine lipidation.

This sequence belongs to the G-protein coupled receptor 1 family. Adrenergic receptor subfamily. ADRA2A sub-subfamily. As to expression, expressed in brain.

The protein localises to the cell membrane. Functionally, alpha-2 adrenergic receptors mediate the catecholamine-induced inhibition of adenylate cyclase through the action of G proteins. The protein is Alpha-2A adrenergic receptor of Rattus norvegicus (Rat).